The sequence spans 352 residues: [Citrate [pro-3S]-lyase] ligase (352 aa).

Residues 1 to 128 (MFGNDIFTRV…VMVLMENSAT (128 aa)) form the N-acetyltransferase domain.

It catalyses the reaction holo-[citrate lyase ACP] + acetate + ATP = acetyl-[citrate lyase ACP] + AMP + diphosphate. Functionally, acetylation of prosthetic group (2-(5''-phosphoribosyl)-3'-dephosphocoenzyme-A) of the gamma subunit of citrate lyase. This chain is [Citrate [pro-3S]-lyase] ligase (citC), found in Escherichia coli (strain K12).